A 347-amino-acid polypeptide reads, in one-letter code: UDP-3-O-acylglucosamine N-acyltransferase 1 (347 aa).

Catalysis depends on His246, which acts as the Proton acceptor.

Belongs to the transferase hexapeptide repeat family. LpxD subfamily. As to quaternary structure, homotrimer.

The enzyme catalyses a UDP-3-O-[(3R)-3-hydroxyacyl]-alpha-D-glucosamine + a (3R)-hydroxyacyl-[ACP] = a UDP-2-N,3-O-bis[(3R)-3-hydroxyacyl]-alpha-D-glucosamine + holo-[ACP] + H(+). The protein operates within bacterial outer membrane biogenesis; LPS lipid A biosynthesis. Catalyzes the N-acylation of UDP-3-O-acylglucosamine using 3-hydroxyacyl-ACP as the acyl donor. Is involved in the biosynthesis of lipid A, a phosphorylated glycolipid that anchors the lipopolysaccharide to the outer membrane of the cell. This chain is UDP-3-O-acylglucosamine N-acyltransferase 1, found in Francisella tularensis subsp. holarctica (strain LVS).